Here is a 367-residue protein sequence, read N- to C-terminus: MGSGYQLLQLPRERFRKTSFLVWVIILFQRAISMPLGIVTNSTLKATEIDQLVCRDKLSSTSQLKSVGLNLEGNGIATDVPSATKRWGFRSGVPPKVVSYEAGEWAENCYNLEIKKSDGSECLPLPPDGVRGFPRCRYVHKVQGTGPCPGDLAFHKNGAFFLYDRLASTVIYRGTTFAEGVIAFLILSEPKKHFWKATPAHEPVNTTDDSTSYYMTLTLSYEMSNFGGEESNTLFKVDNHTYVQLDRPHTPQFLVQLNETLRRNNRLSNSTGRLTWTVDPKIEPDVGEWAFWETKKTFPNNFMEKTCISKFYQPTPTTPQIRARRELSKEKLATTHPPTTPSWFQRIPLQWFQCSLQDGQRKCRPKV.

Positions 1–33 are cleaved as a signal peptide; it reads MGSGYQLLQLPRERFRKTSFLVWVIILFQRAIS. Asn-41 is a glycosylation site (N-linked (GlcNAc...) asparagine; by host). Disulfide bonds link Cys-109/Cys-136 and Cys-122/Cys-148. N-linked (GlcNAc...) asparagine; by host glycosylation is found at Asn-205, Asn-239, Asn-258, and Asn-269.

Belongs to the filoviruses glycoprotein family. In terms of assembly, homodimer; disulfide-linked. The homodimers are linked by two disulfide bonds in a parallel orientation. As to quaternary structure, monomer. Post-translationally, this precursor is processed into mature sGP and delta-peptide by host furin or furin-like proteases. The cleavage site corresponds to the furin optimal cleavage sequence [KR]-X-[KR]-R. In terms of processing, N-glycosylated. O-glycosylated.

Its subcellular location is the secreted. In terms of biological role, seems to possess an anti-inflammatory activity as it can reverse the barrier-decreasing effects of TNF alpha. Might therefore contribute to the lack of inflammatory reaction seen during infection in spite the of extensive necrosis and massive virus production. Does not seem to be involved in activation of primary macrophages. Does not seem to interact specifically with neutrophils. Viroporin that permeabilizes mammalian cell plasma membranes. It acts by altering permeation of ionic compounds and small molecules. This activity may lead to viral enterotoxic activity. The protein is Pre-small/secreted glycoprotein (GP) of Reston ebolavirus (strain Philippines-96) (REBOV).